The sequence spans 369 residues: Saccharopine dehydrogenase [NAD(+), L-lysine-forming] (369 aa).

Positions 19 and 78 each coordinate L-saccharopine. Catalysis depends on Lys78, which acts as the Proton acceptor. The Proton donor role is filled by His96. Gln101 is a binding site for L-saccharopine. Arg130 provides a ligand contact to NAD(+). L-saccharopine is bound by residues Arg131 and Phe135. NAD(+) contacts are provided by residues 203–204, Asp227, Thr231, Tyr251, and Val278; that span reads GR. Cys205 and Cys249 are disulfide-bonded. 279–281 contributes to the L-saccharopine binding site; the sequence is SAD. 318-321 serves as a coordination point for NAD(+); the sequence is IDHL.

Belongs to the AlaDH/PNT family. In terms of assembly, monomer.

The catalysed reaction is L-saccharopine + NAD(+) + H2O = L-lysine + 2-oxoglutarate + NADH + H(+). The protein operates within amino-acid biosynthesis; L-lysine biosynthesis via AAA pathway; L-lysine from L-alpha-aminoadipate (fungal route): step 3/3. Its function is as follows. Catalyzes the NAD(+)-dependent cleavage of saccharopine to L-lysine and 2-oxoglutarate, the final step in the alpha-aminoadipate (AAA) pathway for lysin biosynthesis. This is Saccharopine dehydrogenase [NAD(+), L-lysine-forming] from Yarrowia lipolytica (strain CLIB 122 / E 150) (Yeast).